Here is a 37-residue protein sequence, read N- to C-terminus: Large ribosomal subunit protein bL36 (37 aa).

The protein belongs to the bacterial ribosomal protein bL36 family.

The chain is Large ribosomal subunit protein bL36 from Aliarcobacter butzleri (strain RM4018) (Arcobacter butzleri).